The chain runs to 190 residues: A-type ATP synthase subunit E (190 aa).

Belongs to the V-ATPase E subunit family. Has multiple subunits with at least A(3), B(3), C, D, E, F, H, I and proteolipid K(x).

It is found in the cell membrane. Component of the A-type ATP synthase that produces ATP from ADP in the presence of a proton gradient across the membrane. The protein is A-type ATP synthase subunit E of Pyrobaculum islandicum (strain DSM 4184 / JCM 9189 / GEO3).